A 227-amino-acid chain; its full sequence is Octanoyltransferase (227 aa).

The 179-residue stretch at A31–N209 folds into the BPL/LPL catalytic domain. Residues R71–H78, S139–G141, and G152–A154 each bind substrate. C170 (acyl-thioester intermediate) is an active-site residue.

This sequence belongs to the LipB family.

The protein resides in the cytoplasm. It catalyses the reaction octanoyl-[ACP] + L-lysyl-[protein] = N(6)-octanoyl-L-lysyl-[protein] + holo-[ACP] + H(+). Its pathway is protein modification; protein lipoylation via endogenous pathway; protein N(6)-(lipoyl)lysine from octanoyl-[acyl-carrier-protein]: step 1/2. Functionally, catalyzes the transfer of endogenously produced octanoic acid from octanoyl-acyl-carrier-protein onto the lipoyl domains of lipoate-dependent enzymes. Lipoyl-ACP can also act as a substrate although octanoyl-ACP is likely to be the physiological substrate. This is Octanoyltransferase from Baumannia cicadellinicola subsp. Homalodisca coagulata.